A 115-amino-acid chain; its full sequence is NADH-ubiquinone oxidoreductase chain 3 (115 aa).

The next 3 membrane-spanning stretches (helical) occupy residues Leu-3–Trp-23, Phe-55–Leu-75, and Thr-86–Trp-106.

Belongs to the complex I subunit 3 family. As to quaternary structure, core subunit of respiratory chain NADH dehydrogenase (Complex I) which is composed of 45 different subunits. Interacts with TMEM186. Interacts with TMEM242.

The protein localises to the mitochondrion inner membrane. It carries out the reaction a ubiquinone + NADH + 5 H(+)(in) = a ubiquinol + NAD(+) + 4 H(+)(out). Core subunit of the mitochondrial membrane respiratory chain NADH dehydrogenase (Complex I) which catalyzes electron transfer from NADH through the respiratory chain, using ubiquinone as an electron acceptor. Essential for the catalytic activity of complex I. This chain is NADH-ubiquinone oxidoreductase chain 3, found in Rhinoceros unicornis (Greater Indian rhinoceros).